A 256-amino-acid chain; its full sequence is Small ribosomal subunit protein eS1 (256 aa).

Basic residues predominate over residues 1 to 18 (MAVGKNKRLSKGKKGVKK). The segment at 1 to 21 (MAVGKNKRLSKGKKGVKKRTV) is disordered. N-acetylalanine; partial is present on A2.

This sequence belongs to the eukaryotic ribosomal protein eS1 family. In terms of assembly, component of the small ribosomal subunit. Mature ribosomes consist of a small (40S) and a large (60S) subunit. The 40S subunit contains about 33 different proteins and 1 molecule of RNA (18S). The 60S subunit contains about 49 different proteins and 3 molecules of RNA (25S, 5.8S and 5S).

The protein resides in the cytoplasm. The chain is Small ribosomal subunit protein eS1 (rps1) from Neosartorya fischeri (strain ATCC 1020 / DSM 3700 / CBS 544.65 / FGSC A1164 / JCM 1740 / NRRL 181 / WB 181) (Aspergillus fischerianus).